Reading from the N-terminus, the 470-residue chain is MHFSIPETESRSGDSGGSAYVAYNIHVNGVLHCRVRYSQLLGLREQLRKEYGANVLPAFPPKKLFSLTPAEVEQRREQLEKYMQAVRQDPLLGSSETFNSFLRRAQQETQQVPTEEVSLEVLLSNGQKVLVNVLTSDQTEDVLEAVAAKLDLPDDLIGYFSLFLVREKEDGAFSFVRKLQEFELPYVSVTSLRSQEYKIVLRKSYWDSAYDDDVMENRVGLNLLYAQTVSDIERGWILVTKEQHRQLKSLQEKVSKKEFLRLAQTLRHYGYLRFDACVADFPEKDCPVVVSAGNSELSLQLRLPGQQLREGSFRVTRMRCWRVTSSVPLPSGSTSSPGRGRGEVRLELAFEYLMSKDRLQWVTITSPQAIMMSICLQSMVDELMVKKSGGSIRKMLRRRVGGTLRRSDSQQAVKSPPLLESPDATRESMVKLSSKLSAVSLRGIGSPGTDASASDVHGNFAFEGIGDEDL.

Residues Met1 to Thr109 form the PX domain. Residues Arg36, Ser38, Lys62, and Arg75 each coordinate a 1,2-diacyl-sn-glycero-3-phospho-(1D-myo-inositol-3-phosphate). The 92-residue stretch at Glu115 to Trp206 folds into the Ras-associating domain. The segment at Glu115–Leu432 is FERM-like. The segment at Gly270–Leu432 is PTB-like F3 module. Residues Ser336, Ser407, Ser409, Ser415, Ser421, Ser437, and Ser440 each carry the phosphoserine modification. The interval Val400–Thr425 is disordered.

This sequence belongs to the sorting nexin family. Monomer. Interacts with APP (via cytoplasmic YXNPXY motif). Interacts with KIF1B. Interacts with the C-termini of P-selectin, PTC, LDLR, VLDLR, LRP1 and LRP8. Interacts with KRIT1 (via N-terminus). Interacts with HRAS. Interacts with ITGB1 and ITGB5 (via NPxY motif). Interacts with CCDC22 and CCDC93; the interaction associates SNX17 with the CCC complex. Interacts (via C-terminus) with VPS26C and VPS35L; the interactions are direct and associate SNX17 with the retriever complex.

Its subcellular location is the cytoplasm. The protein localises to the early endosome. It is found in the cytoplasmic vesicle membrane. Functionally, critical regulator of endosomal recycling of numerous surface proteins, including integrins, signaling receptor and channels. Binds to NPxY sequences in the cytoplasmic tails of target cargos. Associates with retriever and CCC complexes to prevent lysosomal degradation and promote cell surface recycling of numerous cargos such as integrins ITGB1, ITGB5 and their associated alpha subunits. Also required for maintenance of normal cell surface levels of APP and LRP1. Interacts with membranes containing phosphatidylinositol 3-phosphate (PtdIns(3P)). The protein is Sorting nexin-17 (SNX17) of Pongo abelii (Sumatran orangutan).